Reading from the N-terminus, the 2556-residue chain is Ubiquitin carboxyl-terminal hydrolase 9Y (2556 aa).

A compositionally biased stretch (polar residues) spans 1 to 33 (MTITTRGSPVGENESQGQTSDGQPQPSFQQNQI). The interval 1-68 (MTITTRGSPV…QHEEEDPSFP (68 aa)) is disordered. A compositionally biased stretch (low complexity) spans 34 to 44 (SSSDSSNETSP). S587 carries the phosphoserine modification. T589 carries the post-translational modification Phosphothreonine. The tract at residues 971-999 (NMPSSPDSSSDSSAGPPGNHSHNNYRDVS) is disordered. The segment covering 973–983 (PSSPDSSSDSS) has biased composition (low complexity). In terms of domain architecture, USP spans 1559-1958 (VGLKNAGATC…NAYILFYERM (400 aa)). C1568 serves as the catalytic Nucleophile. 4 residues coordinate Zn(2+): C1729, H1731, C1773, and C1776. The active-site Proton acceptor is the H1881. S2447 is modified (phosphoserine). The disordered stretch occupies residues 2513–2556 (QNYVPEQPFSGPASHHLNNPQKNDKPQETHESNEEISSCLIKDQ). Basic and acidic residues predominate over residues 2534-2545 (KNDKPQETHESN). Position 2549 is a phosphoserine (S2549).

Belongs to the peptidase C19 family.

The enzyme catalyses Thiol-dependent hydrolysis of ester, thioester, amide, peptide and isopeptide bonds formed by the C-terminal Gly of ubiquitin (a 76-residue protein attached to proteins as an intracellular targeting signal).. Its pathway is protein modification; protein ubiquitination. Functionally, deubiquitinase that mediates deubiquitination of target proteins. May stabilize target proteins that are important for male germ cell development. This Mus musculus (Mouse) protein is Ubiquitin carboxyl-terminal hydrolase 9Y.